A 241-amino-acid chain; its full sequence is Chloride intracellular channel protein 1 (241 aa).

Ala-2 is modified (N-acetylalanine). The interval 2–90 (AEEQPQVELF…EEFLEAVLCP (89 aa)) is required for insertion into the membrane. At Lys-13 the chain carries N6-acetyllysine. Cys-24 serves as a coordination point for glutathione. Residue Cys-24 is modified to S-glutathionyl cysteine; alternate. The G-site motif lies at 24 to 27 (CPFS). Cys-24 and Cys-59 are oxidised to a cystine. The chain crosses the membrane as a helical span at residues 26 to 46 (FSQRLFMVLWLKGVTFNVTTV). Positions 64 and 77 each coordinate glutathione. A GST C-terminal domain is found at 93–233 (YPKLAALNPE…PDDEEIELAY (141 aa)). Lys-119 carries the post-translational modification N6-acetyllysine. Ser-121 bears the Phosphoserine mark. Position 131 is an N6-acetyllysine (Lys-131). Phosphoserine occurs at positions 156 and 211. Tyr-233 carries the post-translational modification Phosphotyrosine.

This sequence belongs to the chloride channel CLIC family. In terms of assembly, monomer. Homodimer (in vitro). Interacts with TRAPPC2. Dimerization requires a conformation change that leads to the exposure of a large hydrophobic surface. In vivo, this may lead to membrane insertion. Interacts with AKAP9. Hydrogen peroxide treatment causes a conformation change, leading to dimerization and formation of an intramolecular disulfide bond between Cys-24 and Cys-59. In terms of tissue distribution, expression is prominent in heart, placenta, liver, kidney and pancreas.

It is found in the nucleus. Its subcellular location is the nucleus membrane. It localises to the cytoplasm. The protein localises to the cell membrane. The protein resides in the endoplasmic reticulum. The enzyme catalyses L-dehydroascorbate + 2 glutathione = glutathione disulfide + L-ascorbate. The catalysed reaction is chloride(in) = chloride(out). It carries out the reaction iodide(out) = iodide(in). It catalyses the reaction thiocyanate(in) = thiocyanate(out). The enzyme catalyses nitrate(in) = nitrate(out). The catalysed reaction is bromide(in) = bromide(out). It carries out the reaction fluoride(in) = fluoride(out). The oxidoreductase activity is inhibited by rapamycin, amphotericin B and IAA-94. The channel conductance is regulated by pH and redox membrane potential. Inhibited by IAA-94. In the soluble state, catalyzes glutaredoxin-like thiol disulfide exchange reactions with reduced glutathione as electron donor. Reduces selenite and dehydroascorbate and may act as an antioxidant during oxidative stress response. Can insert into membranes and form voltage-dependent multi-ion conductive channels. Membrane insertion seems to be redox-regulated and may occur only under oxidizing conditions. Involved in regulation of the cell cycle. The chain is Chloride intracellular channel protein 1 from Homo sapiens (Human).